Consider the following 784-residue polypeptide: Cation/H(+) antiporter 26 (784 aa).

Helical transmembrane passes span P38–L58, L61–L81, Y97–A117, L130–C150, L201–I221, F240–I260, T286–V306, I321–V341, I351–L371, F376–Y396, and E413–V433.

This sequence belongs to the monovalent cation:proton antiporter 2 (CPA2) transporter (TC 2.A.37) family. CHX (TC 2.A.37.4) subfamily. Expressed in pollen.

Its subcellular location is the membrane. Functionally, may operate as a cation/H(+) antiporter. The chain is Cation/H(+) antiporter 26 (CHX26) from Arabidopsis thaliana (Mouse-ear cress).